The chain runs to 305 residues: Homoserine kinase (305 aa).

90 to 100 (PLARGLGSSAS) serves as a coordination point for ATP.

This sequence belongs to the GHMP kinase family. Homoserine kinase subfamily.

The protein localises to the cytoplasm. It catalyses the reaction L-homoserine + ATP = O-phospho-L-homoserine + ADP + H(+). The protein operates within amino-acid biosynthesis; L-threonine biosynthesis; L-threonine from L-aspartate: step 4/5. Its function is as follows. Catalyzes the ATP-dependent phosphorylation of L-homoserine to L-homoserine phosphate. This Staphylococcus saprophyticus subsp. saprophyticus (strain ATCC 15305 / DSM 20229 / NCIMB 8711 / NCTC 7292 / S-41) protein is Homoserine kinase.